The chain runs to 283 residues: K88 fimbrial protein AC (283 aa).

A signal peptide spans methionine 1–alanine 21.

Belongs to the fimbrial K88 protein family. In terms of assembly, K88 fimbria, 0.1-1 micrometer in length and 7 nanometers in diameter, is composed of about 100 identical subunits.

The protein resides in the fimbrium. K88 major fimbrial subunit. Fimbriae (also called pili), are polar filaments radiating from the surface of the bacterium to a length of 0.5-1.5 micrometers and numbering 100-300 per cell. They enable bacteria to colonize the epithelium of specific host organs. The sequence is that of K88 fimbrial protein AC (faeG) from Escherichia coli.